Consider the following 136-residue polypeptide: Protein NrdI (136 aa).

Belongs to the NrdI family.

Probably involved in ribonucleotide reductase function. The protein is Protein NrdI of Salmonella paratyphi B (strain ATCC BAA-1250 / SPB7).